Here is an 85-residue protein sequence, read N- to C-terminus: Putative sodium channel toxin Ts34 (85 aa).

The first 17 residues, methionine 1–alanine 17, serve as a signal peptide directing secretion. The LCN-type CS-alpha/beta domain occupies lysine 19–tryptophan 82. Intrachain disulfides connect cysteine 30/cysteine 81, cysteine 34/cysteine 57, cysteine 43/cysteine 62, and cysteine 47/cysteine 64.

Belongs to the long (4 C-C) scorpion toxin superfamily. Sodium channel inhibitor family. As to expression, expressed by the venom gland.

Its subcellular location is the secreted. Its function is as follows. Putative sodium channel toxin. The chain is Putative sodium channel toxin Ts34 from Tityus serrulatus (Brazilian scorpion).